Reading from the N-terminus, the 266-residue chain is 3-methyl-2-oxobutanoate hydroxymethyltransferase (266 aa).

Mg(2+) contacts are provided by D45 and D84. 3-methyl-2-oxobutanoate is bound by residues 45 to 46, D84, and K112; that span reads DS. E114 is a binding site for Mg(2+). Residue E181 is the Proton acceptor of the active site.

This sequence belongs to the PanB family. Homodecamer; pentamer of dimers. Mg(2+) is required as a cofactor.

It is found in the cytoplasm. The enzyme catalyses 3-methyl-2-oxobutanoate + (6R)-5,10-methylene-5,6,7,8-tetrahydrofolate + H2O = 2-dehydropantoate + (6S)-5,6,7,8-tetrahydrofolate. It participates in cofactor biosynthesis; (R)-pantothenate biosynthesis; (R)-pantoate from 3-methyl-2-oxobutanoate: step 1/2. Its function is as follows. Catalyzes the reversible reaction in which hydroxymethyl group from 5,10-methylenetetrahydrofolate is transferred onto alpha-ketoisovalerate to form ketopantoate. The protein is 3-methyl-2-oxobutanoate hydroxymethyltransferase of Pseudomonas syringae pv. syringae (strain B728a).